The sequence spans 153 residues: 3-hydroxyacyl-[acyl-carrier-protein] dehydratase FabZ (153 aa).

The active site involves histidine 52.

This sequence belongs to the thioester dehydratase family. FabZ subfamily.

It is found in the cytoplasm. The catalysed reaction is a (3R)-hydroxyacyl-[ACP] = a (2E)-enoyl-[ACP] + H2O. Involved in unsaturated fatty acids biosynthesis. Catalyzes the dehydration of short chain beta-hydroxyacyl-ACPs and long chain saturated and unsaturated beta-hydroxyacyl-ACPs. The sequence is that of 3-hydroxyacyl-[acyl-carrier-protein] dehydratase FabZ from Magnetococcus marinus (strain ATCC BAA-1437 / JCM 17883 / MC-1).